The following is a 717-amino-acid chain: MNSPEKSAACDIYDPKSIPDYDREFIDPDDLRQFENALNDNESNSLVALNDWRPIYQRVRKNRGRRKKPRRTTDETREGVLYTVLKWPFLFIVFGWITVLGFAYALTRFYIVLYERWVSWRGKKESLRRELWKQTDYNNWLKAAQALDNHLGNQQWKEIDEYAYYDHLTINKLVNQLRKARTDVELQMRNGVSSSTVIPATEELCALLEGCVKNNFAGVENPRLYSETYSGTKNLVQEYIDEVEKCIQVVSNNKWVSNEDKYHHFKHLDTNFGRTALCLSGGATFAYYHFGVARALLDNGVLPEIITGTSGGALVAALIATRTDEELKQLLVPALAHRIRASSEGMASWIWRWWRTGARFDTITWARECSWFCRGSTTFKEAYERTGRILNVSCVPSDPHSPTILANYLTSPNCVIWSAVLASAAVPGILNPVVLMTKKRDGTLAPYSFGHKWKDGSLRTDIPIRALNLHFNVNFPIVSQVNPHINLFFFSSRGSVGRPVTHRRGRGWRGGFLGSAIEQYIKLDLNKWLRVLRHLELLPRPLGQDWSEIWLQKFSGTITIWPKTIPSDFYYILSDPTPERLARMLNVGQQSAFPMIQFIKNRLKIENAILKGLHQYSPAVSPAQSRRKRGHAGKPSDPMVERLDHNLPDRQPDNKEDLSDSSGIDSNVSSRDSCLQPSSNRRNRRRSTGNIFQEMRRQSAVFFDDSDLYAEDDKKVE.

The chain crosses the membrane as a helical span at residues 87-107; the sequence is WPFLFIVFGWITVLGFAYALT. Positions 277–468 constitute a PNPLA domain; that stretch reads LCLSGGATFA…RTDIPIRALN (192 aa). The short motif at 308–312 is the GXSXG element; the sequence is GTSGG. The active-site Nucleophile is the serine 310. Aspartate 455 acts as the Proton acceptor in catalysis. The segment at 620–696 is disordered; it reads VSPAQSRRKR…STGNIFQEMR (77 aa). A compositionally biased stretch (basic and acidic residues) spans 639–658; that stretch reads MVERLDHNLPDRQPDNKEDL. A compositionally biased stretch (low complexity) spans 660-673; it reads DSSGIDSNVSSRDS.

Belongs to the PLPL family.

The protein localises to the membrane. Probable lipid hydrolase. In Aspergillus oryzae (strain ATCC 42149 / RIB 40) (Yellow koji mold), this protein is Patatin-like phospholipase domain-containing protein AO090003000839.